Here is a 397-residue protein sequence, read N- to C-terminus: Tubby-like protein 8 (397 aa).

A compositionally biased stretch (basic and acidic residues) spans 1–16 (MAGSRKVNDLLEENKG). The tract at residues 1 to 46 (MAGSRKVNDLLEENKGNVDTITGSLSTQKGEDKENVSPEKVSTSVE) is disordered. The span at 17–28 (NVDTITGSLSTQ) shows a compositional bias: polar residues.

It belongs to the TUB family. As to expression, mostly expressed in roots, flowers and siliques.

In Arabidopsis thaliana (Mouse-ear cress), this protein is Tubby-like protein 8.